The following is a 508-amino-acid chain: Photosystem II CP47 reaction center protein (508 aa).

A run of 6 helical transmembrane segments spans residues 21-36 (SVHLMHTALVSGWAGS), 101-115 (IILSGLLFLAAIWHW), 140-156 (GIHLFLSGVLCFSFGAF), 203-218 (IAAGVLGILAGLFHLS), 237-252 (VLSSSIAAVFFAAFVV), and 457-472 (TFALIFFFGHIWHGAR).

Belongs to the PsbB/PsbC family. PsbB subfamily. PSII is composed of 1 copy each of membrane proteins PsbA, PsbB, PsbC, PsbD, PsbE, PsbF, PsbH, PsbI, PsbJ, PsbK, PsbL, PsbM, PsbT, PsbX, PsbY, PsbZ, Psb30/Ycf12, at least 3 peripheral proteins of the oxygen-evolving complex and a large number of cofactors. It forms dimeric complexes. Binds multiple chlorophylls. PSII binds additional chlorophylls, carotenoids and specific lipids. serves as cofactor.

The protein resides in the plastid. Its subcellular location is the chloroplast thylakoid membrane. One of the components of the core complex of photosystem II (PSII). It binds chlorophyll and helps catalyze the primary light-induced photochemical processes of PSII. PSII is a light-driven water:plastoquinone oxidoreductase, using light energy to abstract electrons from H(2)O, generating O(2) and a proton gradient subsequently used for ATP formation. The sequence is that of Photosystem II CP47 reaction center protein from Adiantum capillus-veneris (Maidenhair fern).